Reading from the N-terminus, the 1140-residue chain is Squamosa promoter-binding-like protein 15 (1140 aa).

Disordered stretches follow at residues 73 to 112 and 124 to 177; these read RVNA…LNLQ and DVSP…GGNS. Composition is skewed to low complexity over residues 76-100 and 125-135; these read AGLS…EALR and VSPAATTVSSS. Positions 164-177 are enriched in gly residues; it reads ASGGGGGGGGGGNS. An SBP-type zinc finger spans residues 184-261; it reads YPMCQVDDCR…AGHNRRRRKT (78 aa). Cys187, Cys192, Cys209, His212, Cys228, Cys231, His235, and Cys247 together coordinate Zn(2+). The Bipartite nuclear localization signal signature appears at 244–260; the sequence is KRSCRRRLAGHNRRRRK. Disordered stretches follow at residues 327 to 382, 403 to 472, 496 to 517, and 558 to 597; these read NNGN…ADGF, TSNP…TPPY, LSSE…PVTH, and KDSE…DGQD. Over residues 345–375 the composition is skewed to polar residues; that stretch reads ASHSQQQDSVQRTTNGFEKQTNGLDKQTNGF. Positions 403–430 are enriched in low complexity; that stretch reads TSNPDSNTSQSQGSSDSSGNNKSKSQST. Over residues 450–466 the composition is skewed to basic and acidic residues; the sequence is RKNDALERSPEMYKQPD. The span at 496-514 shows a compositional bias: polar residues; it reads LSSESSNPLDERSPSSSPP. Over residues 579–593 the composition is skewed to low complexity; it reads TSTSCSDHSPSTSNS.

As to expression, expressed in stems, leaf sheaths, and young panicles.

The protein localises to the nucleus. Trans-acting factor that binds specifically to the consensus nucleotide sequence 5'-TNCGTACAA-3'. This chain is Squamosa promoter-binding-like protein 15 (SPL15), found in Oryza sativa subsp. indica (Rice).